A 187-amino-acid polypeptide reads, in one-letter code: Phosphatidylethanolamine-binding protein 1 (187 aa).

Phosphoserine is present on residues Ser-6 and Ser-13. Thr-42 is modified (phosphothreonine). A phosphoserine mark is found at Ser-52, Ser-54, Ser-98, and Ser-153. An interaction with RAF1 region spans residues 93–134 (KGNDISSGTVLSDYVGSGPPKGTGLHRYVWLVYEQARPLKCD).

It belongs to the phosphatidylethanolamine-binding protein family. Has a tendency to form dimers by disulfide cross-linking. Interacts with RAF1 and this interaction is enhanced if RAF1 is phosphorylated on residues 'Ser-338', 'Ser-339', 'Tyr-340' and 'Tyr-341'. Interacts with ALOX15; in response to IL13/interleukin-13, prevents the interaction of PEBP1 with RAF1 to activate the ERK signaling cascade.

It localises to the cytoplasm. In terms of biological role, binds ATP, opioids and phosphatidylethanolamine. Has lower affinity for phosphatidylinositol and phosphatidylcholine. Serine protease inhibitor which inhibits thrombin, neuropsin and chymotrypsin but not trypsin, tissue type plasminogen activator and elastase. Inhibits the kinase activity of RAF1 by inhibiting its activation and by dissociating the RAF1/MEK complex and acting as a competitive inhibitor of MEK phosphorylation. Its function is as follows. HCNP may be involved in the function of the presynaptic cholinergic neurons of the central nervous system. HCNP increases the production of choline acetyltransferase but not acetylcholinesterase. Seems to be mediated by a specific receptor. This Macaca fascicularis (Crab-eating macaque) protein is Phosphatidylethanolamine-binding protein 1 (PEBP1).